A 417-amino-acid chain; its full sequence is Gamma-glutamyl phosphate reductase (417 aa).

This sequence belongs to the gamma-glutamyl phosphate reductase family.

It is found in the cytoplasm. It carries out the reaction L-glutamate 5-semialdehyde + phosphate + NADP(+) = L-glutamyl 5-phosphate + NADPH + H(+). It participates in amino-acid biosynthesis; L-proline biosynthesis; L-glutamate 5-semialdehyde from L-glutamate: step 2/2. Catalyzes the NADPH-dependent reduction of L-glutamate 5-phosphate into L-glutamate 5-semialdehyde and phosphate. The product spontaneously undergoes cyclization to form 1-pyrroline-5-carboxylate. The sequence is that of Gamma-glutamyl phosphate reductase from Idiomarina loihiensis (strain ATCC BAA-735 / DSM 15497 / L2-TR).